Consider the following 285-residue polypeptide: Polyamine aminopropyltransferase (285 aa).

One can recognise a PABS domain in the interval 5 to 241 (DNWYIEHFQP…GWWSVTMASK (237 aa)). Residue glutamine 35 participates in S-methyl-5'-thioadenosine binding. Spermidine contacts are provided by histidine 66 and aspartate 90. S-methyl-5'-thioadenosine-binding positions include aspartate 110 and 141–142 (DG). The active-site Proton acceptor is the aspartate 160. Spermidine is bound at residue 160 to 163 (DSTD). Proline 167 provides a ligand contact to S-methyl-5'-thioadenosine.

This sequence belongs to the spermidine/spermine synthase family. As to quaternary structure, homodimer or homotetramer.

It is found in the cytoplasm. The enzyme catalyses S-adenosyl 3-(methylsulfanyl)propylamine + putrescine = S-methyl-5'-thioadenosine + spermidine + H(+). The protein operates within amine and polyamine biosynthesis; spermidine biosynthesis; spermidine from putrescine: step 1/1. Functionally, catalyzes the irreversible transfer of a propylamine group from the amino donor S-adenosylmethioninamine (decarboxy-AdoMet) to putrescine (1,4-diaminobutane) to yield spermidine. In Xanthomonas axonopodis pv. citri (strain 306), this protein is Polyamine aminopropyltransferase.